The primary structure comprises 986 residues: DNA polymerase I (986 aa).

Residues 1–303 (MFMSAKSPLL…RTFIDKIQAF (303 aa)) enclose the 5'-3' exonuclease domain. In terms of domain architecture, 3'-5' exonuclease spans 304 to 592 (HRNFSDNQSP…MEDRGIRIDC (289 aa)). The disordered stretch occupies residues 308–327 (SDNQSPVPMGNEADNGEPKK). Residues 593–986 (DYLQTLSQQL…HRGSNWMEAK (394 aa)) are polymerase.

This sequence belongs to the DNA polymerase type-A family. Single-chain monomer with multiple functions.

The catalysed reaction is DNA(n) + a 2'-deoxyribonucleoside 5'-triphosphate = DNA(n+1) + diphosphate. Functionally, in addition to polymerase activity, this DNA polymerase exhibits 3'-5' and 5'-3' exonuclease activity. This Synechocystis sp. (strain ATCC 27184 / PCC 6803 / Kazusa) protein is DNA polymerase I (polA).